We begin with the raw amino-acid sequence, 253 residues long: Imidazole glycerol phosphate synthase subunit HisF (253 aa).

Catalysis depends on residues Asp11 and Asp130.

Belongs to the HisA/HisF family. Heterodimer of HisH and HisF.

The protein resides in the cytoplasm. It carries out the reaction 5-[(5-phospho-1-deoxy-D-ribulos-1-ylimino)methylamino]-1-(5-phospho-beta-D-ribosyl)imidazole-4-carboxamide + L-glutamine = D-erythro-1-(imidazol-4-yl)glycerol 3-phosphate + 5-amino-1-(5-phospho-beta-D-ribosyl)imidazole-4-carboxamide + L-glutamate + H(+). It functions in the pathway amino-acid biosynthesis; L-histidine biosynthesis; L-histidine from 5-phospho-alpha-D-ribose 1-diphosphate: step 5/9. IGPS catalyzes the conversion of PRFAR and glutamine to IGP, AICAR and glutamate. The HisF subunit catalyzes the cyclization activity that produces IGP and AICAR from PRFAR using the ammonia provided by the HisH subunit. The sequence is that of Imidazole glycerol phosphate synthase subunit HisF from Clostridium botulinum (strain Langeland / NCTC 10281 / Type F).